The sequence spans 521 residues: AAA ATPase forming ring-shaped complexes (521 aa).

Residues 4 to 44 (TEDLAALNDRLMAKNHALAEALNRAGKELTKAKSRLAQLAQ) are a coiled coil. An ATP-binding site is contributed by 235-240 (GNGKTM).

Belongs to the AAA ATPase family. As to quaternary structure, homohexamer. Assembles into a hexameric ring structure.

The polypeptide is AAA ATPase forming ring-shaped complexes (Bifidobacterium longum subsp. infantis (strain ATCC 15697 / DSM 20088 / JCM 1222 / NCTC 11817 / S12)).